The primary structure comprises 217 residues: Fucoxanthin-chlorophyll a-c binding protein B, chloroplastic (217 aa).

A chloroplast-targeting transit peptide spans 1–39; it reads MKSAVMAVACAAAPGFRGPSAFNGAALTTSAKACSAMKM. 3 consecutive transmembrane segments (helical) span residues 81–101, 122–142, and 183–203; these read IAML…PGML, IPPA…LAVM, and GRAA…NNKP.

Belongs to the fucoxanthin chlorophyll protein family. In terms of assembly, the LHC complex of chromophytic algae is composed of fucoxanthin, chlorophyll A and C bound non-covalently by fucoxanthin chlorophyll proteins (FCPs). The ratio of pigments in this LHC is; fucoxanthin: chlorophyll C: chlorophyll A; (0.6-1): (0.1-0.3): (1).

It is found in the plastid. It localises to the chloroplast thylakoid membrane. Functionally, the light-harvesting complex (LHC) functions as a light receptor, it captures and delivers excitation energy to photosystems with which it is closely associated. Energy is transferred from the carotenoid and chlorophyll C (or B) to chlorophyll A and the photosynthetic reaction centers where it is used to synthesize ATP and reducing power. The sequence is that of Fucoxanthin-chlorophyll a-c binding protein B, chloroplastic (FCPB) from Macrocystis pyrifera (Giant kelp).